Reading from the N-terminus, the 270-residue chain is Formamidopyrimidine-DNA glycosylase (270 aa).

Residue Pro2 is the Schiff-base intermediate with DNA of the active site. The Proton donor role is filled by Glu3. Lys57 serves as the catalytic Proton donor; for beta-elimination activity. His90, Arg109, and Lys150 together coordinate DNA. Residues 235-269 (QIYGKKGCPCPKCGQKIESFTVGQRNSYVCLHCQK) form an FPG-type zinc finger. The Proton donor; for delta-elimination activity role is filled by Arg259.

The protein belongs to the FPG family. As to quaternary structure, monomer. Zn(2+) is required as a cofactor.

It catalyses the reaction Hydrolysis of DNA containing ring-opened 7-methylguanine residues, releasing 2,6-diamino-4-hydroxy-5-(N-methyl)formamidopyrimidine.. The catalysed reaction is 2'-deoxyribonucleotide-(2'-deoxyribose 5'-phosphate)-2'-deoxyribonucleotide-DNA = a 3'-end 2'-deoxyribonucleotide-(2,3-dehydro-2,3-deoxyribose 5'-phosphate)-DNA + a 5'-end 5'-phospho-2'-deoxyribonucleoside-DNA + H(+). Functionally, involved in base excision repair of DNA damaged by oxidation or by mutagenic agents. Acts as a DNA glycosylase that recognizes and removes damaged bases. Has a preference for oxidized purines, such as 7,8-dihydro-8-oxoguanine (8-oxoG). Has AP (apurinic/apyrimidinic) lyase activity and introduces nicks in the DNA strand. Cleaves the DNA backbone by beta-delta elimination to generate a single-strand break at the site of the removed base with both 3'- and 5'-phosphates. The sequence is that of Formamidopyrimidine-DNA glycosylase from Actinobacillus succinogenes (strain ATCC 55618 / DSM 22257 / CCUG 43843 / 130Z).